A 383-amino-acid chain; its full sequence is Beta-1,3-galactosyltransferase 4 (383 aa).

The Cytoplasmic portion of the chain corresponds to 1 to 8 (MPLSLFRR). A helical transmembrane segment spans residues 9–29 (LLLAALLLVIIWTLFGPSGIG). Topologically, residues 30 to 383 (EELLSLSLAS…RCRVIAWLHS (354 aa)) are lumenal. Asparagine 149 carries an N-linked (GlcNAc...) asparagine glycan.

The protein belongs to the glycosyltransferase 31 family.

Its subcellular location is the golgi apparatus membrane. It catalyses the reaction a ganglioside GM2 (d18:1(4E)) + UDP-alpha-D-galactose = a ganglioside GM1 (d18:1(4E)) + UDP + H(+). It carries out the reaction a ganglioside GM2 + UDP-alpha-D-galactose = a ganglioside GM1 + UDP + H(+). The catalysed reaction is a ganglioside GD2 (d18:1(4E)) + UDP-alpha-D-galactose = a ganglioside GD1b (d18:1(4E)) + UDP + H(+). The enzyme catalyses a ganglioside GA2 (d18:1(4E)) + UDP-alpha-D-galactose = a ganglioside GA1 (d18:1(4E)) + UDP + H(+). The protein operates within protein modification; protein glycosylation. In terms of biological role, involved in GM1/GD1B/GA1 ganglioside biosynthesis. The sequence is that of Beta-1,3-galactosyltransferase 4 (B3GALT4) from Canis lupus familiaris (Dog).